The chain runs to 642 residues: Threonine--tRNA ligase (642 aa).

Residues Met-1–Thr-63 form the TGS domain. The segment at Asp-242–Pro-533 is catalytic. 3 residues coordinate Zn(2+): Cys-334, His-385, and His-510.

Belongs to the class-II aminoacyl-tRNA synthetase family. In terms of assembly, homodimer. The cofactor is Zn(2+).

The protein localises to the cytoplasm. It carries out the reaction tRNA(Thr) + L-threonine + ATP = L-threonyl-tRNA(Thr) + AMP + diphosphate + H(+). In terms of biological role, catalyzes the attachment of threonine to tRNA(Thr) in a two-step reaction: L-threonine is first activated by ATP to form Thr-AMP and then transferred to the acceptor end of tRNA(Thr). This chain is Threonine--tRNA ligase, found in Haloarcula marismortui (strain ATCC 43049 / DSM 3752 / JCM 8966 / VKM B-1809) (Halobacterium marismortui).